A 312-amino-acid chain; its full sequence is Gamma-soluble NSF attachment protein (312 aa).

The disordered stretch occupies residues 281-312; the sequence is KKKSPATPQAKPDGAAGMAAEEEEDEYSGGLC. The residue at position 284 (S284) is a Phosphoserine. Residue T287 is modified to Phosphothreonine. Residues 300–312 are compositionally biased toward acidic residues; the sequence is AEEEEDEYSGGLC. S308 bears the Phosphoserine mark.

Belongs to the SNAP family. In terms of assembly, interacts with RAB11FIP5. Interacts with VTI1A. In terms of tissue distribution, abundantly expressed in the heart, liver and kidneys with lower expression in the brain, spleen, lung, muscle and testes.

Its subcellular location is the membrane. It localises to the golgi apparatus. Its function is as follows. Required for vesicular transport between the endoplasmic reticulum and the Golgi apparatus. In Mus musculus (Mouse), this protein is Gamma-soluble NSF attachment protein.